The following is a 337-amino-acid chain: MAKEAVKYVWEGAIPLQIHLHKSDVASHPAPPPALVLAPRIGYLPLLIPLIKPYFKDSLPPGEDSIWFDYKGFPLKWYIPTGVLFDLLCAEPERPWNLTIHFRGYPCNILIPCEGEDSVKWNFVNSLKEAQYIINGNCKNVMNMSQSDQEDLWTSVMNGDLDAYTRLSPKLKMGTVEDEFSRKTSLSSPQSQQVVPETEVAGQVKTARIPVRLYVRSLNKDFENLEDVPEIDTWDDISYLNRPVEFLKEEGKCFTLRDAIKSLLPEFMGDRAQTSGEERSIDDTEEADGSREMGEIKLVRIQGIEMKLEIPFSWVVNNLMNPEFYLHISVLVKAPQR.

Residue K128 forms a Glycyl lysine isopeptide (Lys-Gly) (interchain with G-Cter in ATG12) linkage. A disordered region spans residues 271-290; sequence RAQTSGEERSIDDTEEADGS. A compositionally biased stretch (basic and acidic residues) spans 276-290; the sequence is GEERSIDDTEEADGS.

This sequence belongs to the ATG5 family. In terms of assembly, conjugated to ATG12. Post-translationally, conjugated to ATG12; which is essential for autophagy. Conjugation with ATG12 involves ATG7 as an E1-like activating enzyme and ATG10 as an E2-like conjugating enzyme. Ubiquitous.

The protein localises to the cytoplasm. In terms of biological role, required for autophagy. Conjugation to ATG12 is essential for plant nutrient recycling. Involved in a negative feedback loop that modulates NPR1-dependent salicylic acid (SA) signaling and limits senescence and immunity-related programmed cell death (PCD) in plants. Involved in complete proteolysis of chloroplast stroma proteins in senescent leaves. Involved in the degradation of damaged peroxisomes. The polypeptide is Autophagy protein 5 (Arabidopsis thaliana (Mouse-ear cress)).